Here is a 314-residue protein sequence, read N- to C-terminus: tRNA dimethylallyltransferase (314 aa).

13-20 (GPTAVGKT) provides a ligand contact to ATP. 15–20 (TAVGKT) provides a ligand contact to substrate. The interval 38-41 (DSMQ) is interaction with substrate tRNA.

This sequence belongs to the IPP transferase family. As to quaternary structure, monomer. Requires Mg(2+) as cofactor.

It carries out the reaction adenosine(37) in tRNA + dimethylallyl diphosphate = N(6)-dimethylallyladenosine(37) in tRNA + diphosphate. Its function is as follows. Catalyzes the transfer of a dimethylallyl group onto the adenine at position 37 in tRNAs that read codons beginning with uridine, leading to the formation of N6-(dimethylallyl)adenosine (i(6)A). The sequence is that of tRNA dimethylallyltransferase from Bacillus velezensis (strain DSM 23117 / BGSC 10A6 / LMG 26770 / FZB42) (Bacillus amyloliquefaciens subsp. plantarum).